The sequence spans 110 residues: tRNA-binding protein YgjH (110 aa).

The region spanning 8-110 (DFARLEMRVG…RMMPAGVRVV (103 aa)) is the tRNA-binding domain.

Homodimer.

The polypeptide is tRNA-binding protein YgjH (ygjH) (Escherichia coli (strain K12)).